We begin with the raw amino-acid sequence, 584 residues long: Probable terpene synthase 9 (584 aa).

D339, D343, and E491 together coordinate Mg(2+). The DDXXD motif motif lies at 339–343 (DDMYD).

The protein belongs to the terpene synthase family. The cofactor is Mg(2+).

Probable sesquiterpene synthase. In Ricinus communis (Castor bean), this protein is Probable terpene synthase 9 (TPS9).